Here is a 540-residue protein sequence, read N- to C-terminus: Probable ATP-dependent RNA helicase DDX28 (540 aa).

Positions Leu-3–Leu-18 match the Mitochondrial targeting signal motif. The Q motif motif lies at Gly-126–Ser-156. Positions Ile-159–Thr-351 constitute a Helicase ATP-binding domain. An ATP-binding site is contributed by Ala-172 to Thr-179. Positions Leu-180–Leu-191 match the Nuclear export signal motif. The DEAD signature appears at Asp-286 to Asp-289. The 160-residue stretch at Lys-377–Leu-536 folds into the Helicase C-terminal domain. Positions Arg-520–Arg-523 match the Nuclear localization signal motif.

The protein belongs to the DEAD box helicase family. Monomer. Found in a complex with GRSF1, DHX30, FASTKD2 and FASTKD5. Associates with the 16S mitochondrial rRNA (16S mt-rRNA) and with the mitochondrial ribosome large subunit (39S).

It localises to the nucleus. Its subcellular location is the mitochondrion. It is found in the mitochondrion matrix. The protein resides in the mitochondrion nucleoid. The enzyme catalyses ATP + H2O = ADP + phosphate + H(+). Plays an essential role in facilitating the proper assembly of the mitochondrial large ribosomal subunit and its helicase activity is essential for this function. May be involved in RNA processing or transport. Has RNA and Mg(2+)-dependent ATPase activity. The chain is Probable ATP-dependent RNA helicase DDX28 (Ddx28) from Mus musculus (Mouse).